The chain runs to 784 residues: MTKKLALKRRGKDSEPTNEVVASSEASENEEEEEDLLQAVKDPGEDSTDDEGIDQEYHSDSSEELQFESDEEGNYLGRKQSSSAEEDEESSDEEDNEEEGSTDEEEVEDEEKVSKSKQSDDKPSGSGAASKKALTAELPKRDSSKPEYQDSDTSDEEDIRNTVGNIPMHWYDEYKHIGYDWDAKKIIKPPQGDQIDEFLRKIEDPDFWRTVKDPLTGQDVRLTDEDIALIKRIVSGRIPNKDHEEYEPWIEWFTSEVEKMPIKNVPDHKRSFLPSVSEKKRVSRMVHALKMGWMKTTEEVEREKQAKRGPKFYMLWETDTSREHMRRIHDPVSAPKRDLPGHAESYNPPPEYLFDAKETKEWLKLKDEPHKRKLHFMPQKFKSLREVPAYSRYLRERFLRCLDLYLCPRAKRVKLNIDAEYLIPKLPSPRDLQPFPTVESMVYRGHTDLVRSVSVEPKGEYLVSGSDDKTVKIWEIATGRCIRTIETDEVVRCVAWCPNPKLSIIAVATGNRLLLVNPKVGDKVLVQKTDDLLAEAPSQDVIESERIKTAVQWSNAEADEQEKGVRVVITHFKPIRQVTWHGRGDYLATVMPEGANRSALIHQLSKRRSQIPFSKSKGLIQFVLFHPVKPCFFVATQHNIRIYDLVKQELVKKLLTNSKWISGMSIHPKGDNLLVSTYDKKMLWFDLDLSTKPYQTMRLHRNAVRSVAFHRRYPLFASGSDDQAVIVSHGMVYNDLLQNPLIVPLKKLQTHEKRDEFGVLDVNWHPVQPWVFSTGADSTIRLYT.

Residues Met-1–Gly-11 are compositionally biased toward basic residues. The disordered stretch occupies residues Met-1–Ile-159. 4 stretches are compositionally biased toward acidic residues: residues Ser-27–Leu-36, Glu-45–Asp-54, Ser-62–Gly-73, and Ala-84–Glu-111. Basic and acidic residues-rich tracts occupy residues Lys-112–Pro-123 and Leu-138–Tyr-148. A compositionally biased stretch (acidic residues) spans Gln-149–Asp-158. WD repeat units lie at residues Gly-445–Glu-486, Asp-488–Val-526, Thr-570–Pro-612, Lys-615–Lys-653, Thr-656–Gln-695, Leu-699–Gln-738, and Arg-754–Thr-784.

It belongs to the WD repeat BOP1/ERB1 family.

It localises to the nucleus. Its subcellular location is the nucleolus. It is found in the nucleoplasm. Its function is as follows. Required for maturation of ribosomal RNAs and formation of the large ribosomal subunit. This Drosophila sechellia (Fruit fly) protein is Ribosome biogenesis protein BOP1 homolog.